A 204-amino-acid polypeptide reads, in one-letter code: ATP-dependent Clp protease proteolytic subunit (204 aa).

S102 (nucleophile) is an active-site residue. The active site involves H127.

This sequence belongs to the peptidase S14 family. In terms of assembly, fourteen ClpP subunits assemble into 2 heptameric rings which stack back to back to give a disk-like structure with a central cavity, resembling the structure of eukaryotic proteasomes.

The protein localises to the cytoplasm. The catalysed reaction is Hydrolysis of proteins to small peptides in the presence of ATP and magnesium. alpha-casein is the usual test substrate. In the absence of ATP, only oligopeptides shorter than five residues are hydrolyzed (such as succinyl-Leu-Tyr-|-NHMec, and Leu-Tyr-Leu-|-Tyr-Trp, in which cleavage of the -Tyr-|-Leu- and -Tyr-|-Trp bonds also occurs).. Cleaves peptides in various proteins in a process that requires ATP hydrolysis. Has a chymotrypsin-like activity. Plays a major role in the degradation of misfolded proteins. This chain is ATP-dependent Clp protease proteolytic subunit, found in Neisseria meningitidis serogroup C (strain 053442).